A 1651-amino-acid polypeptide reads, in one-letter code: A.superbus venom factor 2 (1651 aa).

Positions 1–22 (MEGMALYLVAALLIGFPGSSHG) are cleaved as a signal peptide. N-linked (GlcNAc...) asparagine glycosylation occurs at asparagine 189. Mg(2+) contacts are provided by proline 519, aspartate 542, valine 543, and aspartate 545. Intrachain disulfides connect cysteine 547-cysteine 808, cysteine 616-cysteine 651, cysteine 684-cysteine 711, cysteine 685-cysteine 718, cysteine 698-cysteine 719, cysteine 864-cysteine 1501, cysteine 1346-cysteine 1477, cysteine 1377-cysteine 1446, cysteine 1494-cysteine 1499, cysteine 1506-cysteine 1578, cysteine 1525-cysteine 1649, and cysteine 1625-cysteine 1634. The propeptide occupies 657–739 (RRRRSSVLLL…QRESELFLAR (83 aa)). The tract at residues 661 to 739 (SSVLLLDSKA…QRESELFLAR (79 aa)) is C3a-like domain. Residues 684–719 (CCEDGMHENPMGYTCEKRAKYTQEGDACKAAFLECC) form the Anaphylatoxin-like domain. A factor B binding site region spans residues 743–754 (EDEFFEEDNIIS). The propeptide occupies 992-1269 (HLIITPSGSG…VMVFQALAEY (278 aa)). Positions 992–1269 (HLIITPSGSG…VMVFQALAEY (278 aa)) are C3d-like domain. The segment at 1197 to 1259 (VLMAASTGRD…GGTYGQTQAT (63 aa)) is factor H binding site. N-linked (GlcNAc...) asparagine glycans are attached at residues asparagine 1282 and asparagine 1352. In terms of domain architecture, NTR spans 1506 to 1649 (CSLLNQQKKI…LSNTLTIFGC (144 aa)).

Belongs to the venom complement C3 homolog family. Heterotrimer of alpha, beta and gamma chains; disulfide-linked. Is active with factor B in the presence of factor D. First processed by the removal of 4 Arg residues by furin-type protease, forming two chains, alpha and gamma/beta precursor, linked by a disulfide bond. This mature AVF is composed of three chains: alpha, gamma and beta. In terms of tissue distribution, expressed by the venom gland.

Its subcellular location is the secreted. Functionally, complement-activating protein in snake venom. It is a structural and functional analog of complement component C3b, the activated form of C3. It binds factor B (CFB), which is subsequently cleaved by factor D (CFD) to form the bimolecular complex AVF/Bb. AVF/Bb is a C3 convertase that cleaves complement component C3, but not C5 (as do CVF/Bb). The sequence is that of A.superbus venom factor 2 from Austrelaps superbus (Lowland copperhead snake).